Here is a 248-residue protein sequence, read N- to C-terminus: Probable transcriptional regulatory protein Nham_3525 (248 aa).

Residues 1–21 (MAGHSQFKNIMHRKGRQDAQK) form a disordered region.

It belongs to the TACO1 family.

The protein localises to the cytoplasm. This chain is Probable transcriptional regulatory protein Nham_3525, found in Nitrobacter hamburgensis (strain DSM 10229 / NCIMB 13809 / X14).